The sequence spans 199 residues: Adenylyl-sulfate kinase (199 aa).

31–38 (GLSGSGKS) serves as a coordination point for ATP. The active-site Phosphoserine intermediate is the S105.

It belongs to the APS kinase family.

The enzyme catalyses adenosine 5'-phosphosulfate + ATP = 3'-phosphoadenylyl sulfate + ADP + H(+). It functions in the pathway sulfur metabolism; hydrogen sulfide biosynthesis; sulfite from sulfate: step 2/3. Functionally, catalyzes the synthesis of activated sulfate. The polypeptide is Adenylyl-sulfate kinase (Marinobacter nauticus (strain ATCC 700491 / DSM 11845 / VT8) (Marinobacter aquaeolei)).